The chain runs to 422 residues: MYTHVDVVGIAEASAALYVQKDRDRYSDVLTTIENFIYQHKCIITGESAHLLFLKKNIYLYEFYSNNVAEHSKALATLLYKLDPEYLTRYTVLITKIPNHWYVINVDQREFVRLYAIPAVKQHLPIPILPFYCTSALTQQELFCLGPELQLIQIYSKLCNPNFVEEWPTLLDYEKSMRTLFLEQFPQRLEMTGGKKEEEEKHESIIKKIILEMVSTRQRIVVGGYIQKNLYNHVLKNRNRLQLITSLNIYEEKDIIQQFCDSNGLKIKIRINNPLLPTNPELRRLTIYFNNTNDDDQSYLIVDMYNTGSYELVPTNQINTLDGSFLIGTPFVQARFLLVEIWVLMLIAQQTKKDTKKIIQFFINQYEMLMNSPWPSMEALFPSSSKRYLGNYVDPNALIKWAQLKLKRIPPFYPGKPDEKSC.

This sequence belongs to the asfivirus K421R family.

The protein resides in the virion. This is an uncharacterized protein from Ornithodoros (relapsing fever ticks).